A 213-amino-acid chain; its full sequence is uncharacterized protein (213 aa).

Residues Gly-53, Glu-74, and Asp-97 each contribute to the S-adenosyl-L-methionine site.

Belongs to the methyltransferase superfamily. YrrT family.

Functionally, could be a S-adenosyl-L-methionine-dependent methyltransferase. This is an uncharacterized protein from Bacillus velezensis (strain DSM 23117 / BGSC 10A6 / LMG 26770 / FZB42) (Bacillus amyloliquefaciens subsp. plantarum).